We begin with the raw amino-acid sequence, 248 residues long: 4-hydroxy-tetrahydrodipicolinate reductase (248 aa).

Residues 8 to 13 (GAKGRV), Asp-34, 76 to 78 (GTT), and 103 to 106 (APNF) each bind NAD(+). The active-site Proton donor/acceptor is His-133. Residue His-134 coordinates (S)-2,3,4,5-tetrahydrodipicolinate. Lys-137 (proton donor) is an active-site residue. (S)-2,3,4,5-tetrahydrodipicolinate is bound at residue 143 to 144 (GT).

The protein belongs to the DapB family.

It is found in the cytoplasm. It carries out the reaction (S)-2,3,4,5-tetrahydrodipicolinate + NAD(+) + H2O = (2S,4S)-4-hydroxy-2,3,4,5-tetrahydrodipicolinate + NADH + H(+). It catalyses the reaction (S)-2,3,4,5-tetrahydrodipicolinate + NADP(+) + H2O = (2S,4S)-4-hydroxy-2,3,4,5-tetrahydrodipicolinate + NADPH + H(+). It functions in the pathway amino-acid biosynthesis; L-lysine biosynthesis via DAP pathway; (S)-tetrahydrodipicolinate from L-aspartate: step 4/4. In terms of biological role, catalyzes the conversion of 4-hydroxy-tetrahydrodipicolinate (HTPA) to tetrahydrodipicolinate. In Corynebacterium urealyticum (strain ATCC 43042 / DSM 7109), this protein is 4-hydroxy-tetrahydrodipicolinate reductase.